The primary structure comprises 1756 residues: Multifunctional conjugation protein TraI (1756 aa).

Residues 1–330 (MMSIAQVRSA…TQAIAGLSER (330 aa)) are DNA relaxase. Tyr16 (O-(5'-phospho-DNA)-tyrosine intermediate; for relaxase activity) is an active-site residue. Catalysis depends on Tyr17, which acts as the Relaxase. Residues His146, His157, and His159 each coordinate Mg(2+). The segment at 950–1500 (GKEAVMPLME…LRDVAAGRAV (551 aa)) is DNA helicase I. 992–999 (GYAGVGKT) is a binding site for ATP. Residues 1534 to 1756 (RNGKSAGIWL…LQKEKTLGGD (223 aa)) form a required for DNA transfer, may interact with TraM region. The stretch at 1717–1753 (QRVREAVREIARENLLQERLQQMERDMVRDLQKEKTL) forms a coiled coil.

This sequence to TraI of plasmid IncFII R100. In terms of assembly, monomer. Part of the relaxosome, a complex composed of plasmid-encodes TraI, TraM, TraY and host-encoded IHF bound to the F plasmid origin of transfer (oriT). Directly contacts coupling protein TraD. Seems to directly contact TraM via its C-terminus. Mg(2+) is required as a cofactor.

Its subcellular location is the cytoplasm. It carries out the reaction ATP-independent breakage of single-stranded DNA, followed by passage and rejoining.. The enzyme catalyses ATP + H2O = ADP + phosphate + H(+). Nicking activity (relaxase) is inhibited by bisphosphonates such as the non-competitive inhibitor imidobisphosphate (PNP), etidronic acid (ETIDRO) and clodronic acid (CLODRO). The latter 2 are competitive inhibitors, and are already used clinically to treat bone loss (marketed as Didronel and Bonefos). All 3 compounds also inhibit conjugation and kill F plasmid-containing cells. They are specific to dual tyrosine relaxases such as those found in F and related R conjugative plasmids. In terms of biological role, conjugative DNA transfer (CDT) is the unidirectional transfer of ssDNA plasmid from a donor to a recipient cell. It is the central mechanism by which antibiotic resistance and virulence factors are propagated in bacterial populations. Part of the relaxosome, which facilitates a site- and strand-specific cut in the origin of transfer by TraI, at the nic site. Relaxosome formation requires binding of IHF and TraY to the oriT region, which then facilitates binding of TraI relaxase. TraI forms a covalent 5'-phosphotyrosine intermediate linkage to the ssDNA. The transesterified T-strand moves from the donor cell to the recipient cell in a 5'to 3' direction, with the DNA helicase activity of TraI unwinding the DNA. DNA transfer occurs via the conjugative pore (transferosome) an intercellular junction mediated by a type IV secretion system, with TraD providing the means to link the relaxosome to the conjugative pore. The relaxase completes DNA transfer by reversing the covalent phosphotyrosine linkage and releasing the T-strand. Functionally, traI has also been identified as DNA helicase I. DNA. helicase I is a potent, highly processive DNA-dependent ATPase, able to unwind about 1.1 kb dsDNA per second in a 5' to 3' manner. This Escherichia coli (strain K12) protein is Multifunctional conjugation protein TraI (traI).